Consider the following 1025-residue polypeptide: Multidrug resistance protein MdtC (1025 aa).

Transmembrane regions (helical) follow at residues 3 to 23, 333 to 353, 360 to 380, 387 to 407, 431 to 451, 463 to 483, 528 to 548, 853 to 873, 875 to 895, 897 to 917, 953 to 973, and 984 to 1004; these read FFALFIYRPVATILLSVAITL, EVEQTLIISVALVILVVFLFL, IIPAVVVPVSLIGTFAAMYLC, LSLMALTIATGFVVDDAIVVL, VGFTVLSMSLSLVAVFLPLLL, FAVTLSVAIGISLLVSLTLTP, LVGVVLLGTIALNIWLYISIP, VILIIAAIATVYIVLGILYES, VHPLTILSTLPSAGVGALLAL, LFNAPFSLIALIGIMLLIGIV, PIMMTTLAALFGALPLVLSGG, and ITIVGGLVMSQLLTLYTTPVV.

It belongs to the resistance-nodulation-cell division (RND) (TC 2.A.6) family. MdtC subfamily. As to quaternary structure, part of a tripartite efflux system composed of MdtA, MdtB and MdtC. MdtC forms a heteromultimer with MdtB.

The protein resides in the cell inner membrane. Its function is as follows. The MdtABC tripartite complex confers resistance against novobiocin and deoxycholate. In Escherichia coli O8 (strain IAI1), this protein is Multidrug resistance protein MdtC.